Consider the following 348-residue polypeptide: MQKKDILFSIGWPLSSLYAGIMKLRCLLYRRGLFRQHHFPVPVISVGNLTMGGTGKTPVTHYIAKLLLEHGLQPAIISRGYSGKSGGEVNIVSDGQRILLSAEQAGDEPYMLASMLAGVIVITGKKRYLSCKYAVEKMQAEVIILDDGFQHLAVARNLDLVLFDAQTGMGNNRVFPGGDLREARFALDRADAFLITGKCPREEEELLAIELELQHELPQCPLFSVYRTEGVFYSAKQEKVVTHLPKKVFAFCGIANPERFHHDLEKQGFSLVGFKAFSDHQQYTGQCIEEIVKEAKKGGAQAIITTDKDLVKIDSFATELPLYSARPRTTISTDFDELILKTCASFGE.

Residue 50–57 coordinates ATP; that stretch reads TMGGTGKT.

It belongs to the LpxK family.

The enzyme catalyses a lipid A disaccharide + ATP = a lipid IVA + ADP + H(+). Its pathway is glycolipid biosynthesis; lipid IV(A) biosynthesis; lipid IV(A) from (3R)-3-hydroxytetradecanoyl-[acyl-carrier-protein] and UDP-N-acetyl-alpha-D-glucosamine: step 6/6. In terms of biological role, transfers the gamma-phosphate of ATP to the 4'-position of a tetraacyldisaccharide 1-phosphate intermediate (termed DS-1-P) to form tetraacyldisaccharide 1,4'-bis-phosphate (lipid IVA). This chain is Tetraacyldisaccharide 4'-kinase, found in Desulfotalea psychrophila (strain LSv54 / DSM 12343).